The chain runs to 391 residues: Probable dual-specificity RNA methyltransferase RlmN (391 aa).

Residues 1–33 are disordered; the sequence is MTTPLDTPTREPLPLAPAGPGKLVMSAPRRGKP. Positions 12 to 21 are enriched in low complexity; the sequence is PLPLAPAGPG. Residue Glu124 is the Proton acceptor of the active site. Positions 130–373 constitute a Radical SAM core domain; that stretch reads YKNRDTICIS…TTVRDTRGSD (244 aa). A disulfide bridge links Cys137 with Cys378. Residues Cys144, Cys148, and Cys151 each coordinate [4Fe-4S] cluster. Residues 199–200, Ser233, 256–258, and Asn335 contribute to the S-adenosyl-L-methionine site; these read GE and SLH. The active-site S-methylcysteine intermediate is Cys378.

This sequence belongs to the radical SAM superfamily. RlmN family. [4Fe-4S] cluster serves as cofactor.

It is found in the cytoplasm. The enzyme catalyses adenosine(2503) in 23S rRNA + 2 reduced [2Fe-2S]-[ferredoxin] + 2 S-adenosyl-L-methionine = 2-methyladenosine(2503) in 23S rRNA + 5'-deoxyadenosine + L-methionine + 2 oxidized [2Fe-2S]-[ferredoxin] + S-adenosyl-L-homocysteine. It catalyses the reaction adenosine(37) in tRNA + 2 reduced [2Fe-2S]-[ferredoxin] + 2 S-adenosyl-L-methionine = 2-methyladenosine(37) in tRNA + 5'-deoxyadenosine + L-methionine + 2 oxidized [2Fe-2S]-[ferredoxin] + S-adenosyl-L-homocysteine. Specifically methylates position 2 of adenine 2503 in 23S rRNA and position 2 of adenine 37 in tRNAs. This Kineococcus radiotolerans (strain ATCC BAA-149 / DSM 14245 / SRS30216) protein is Probable dual-specificity RNA methyltransferase RlmN.